A 278-amino-acid polypeptide reads, in one-letter code: Pyrroline-5-carboxylate reductase (278 aa).

The protein belongs to the pyrroline-5-carboxylate reductase family.

The protein localises to the cytoplasm. It catalyses the reaction L-proline + NADP(+) = (S)-1-pyrroline-5-carboxylate + NADPH + 2 H(+). The enzyme catalyses L-proline + NAD(+) = (S)-1-pyrroline-5-carboxylate + NADH + 2 H(+). Its pathway is amino-acid biosynthesis; L-proline biosynthesis; L-proline from L-glutamate 5-semialdehyde: step 1/1. The polypeptide is Pyrroline-5-carboxylate reductase (Actinidia chinensis var. chinensis (Chinese soft-hair kiwi)).